We begin with the raw amino-acid sequence, 664 residues long: Intraflagellar transport protein 70B (664 aa).

TPR repeat units lie at residues 11-44 (DGEF…SPRS), 45-78 (RAGL…HPEL), 153-186 (LDGQ…SGYR), 188-220 (DLSY…GIRQ), 385-418 (LTEQ…YEDT), 423-456 (IPVL…CNDH), and 458-491 (VWKL…HYDN). Residues 509–532 (MISQNEEAEELMRKIGKEEEQLSY) are a coiled coil. Residues 543–576 (CIVNLVIGTLYCAKGNYDFGISRVIKSLEPCNKK) form a TPR 8 repeat.

This sequence belongs to the TTC30/dfy-1/fleer family. Interacts with the IFT B complex components IFT27, IFT46, IFT74, IFT52, IFT57, IFT80, IFT81 and IFT88. Interacts with KIF17.

Its subcellular location is the cell projection. The protein localises to the cilium. Its function is as follows. Required for polyglutamylation of axonemal tubulin. Plays a role in anterograde intraflagellar transport (IFT), the process by which cilia precursors are transported from the base of the cilium to the site of their incorporation at the tip. The sequence is that of Intraflagellar transport protein 70B (IFT70B) from Bos taurus (Bovine).